A 265-amino-acid polypeptide reads, in one-letter code: Undecaprenyl-diphosphatase (265 aa).

Helical transmembrane passes span 7–27 (VIVS…PISS), 45–65 (TKIL…YFFH), 86–106 (LHIL…YKKI), 108–128 (LLFN…FLLI), 145–165 (ISLL…YPGF), 186–206 (IEFS…YDFI), 214–234 (ILDL…SILC), and 245–265 (TSLI…YFIN).

Belongs to the UppP family.

Its subcellular location is the cell membrane. It catalyses the reaction di-trans,octa-cis-undecaprenyl diphosphate + H2O = di-trans,octa-cis-undecaprenyl phosphate + phosphate + H(+). Its function is as follows. Catalyzes the dephosphorylation of undecaprenyl diphosphate (UPP). Confers resistance to bacitracin. The polypeptide is Undecaprenyl-diphosphatase (Buchnera aphidicola subsp. Acyrthosiphon pisum (strain 5A)).